A 449-amino-acid chain; its full sequence is Glycerol-3-phosphate acyltransferase 3 (449 aa).

3 consecutive transmembrane segments (helical) span residues 9 to 29 (FVLLHVWMSIVAGLIVLPAMF), 146 to 166 (ISVRLTIIWGLGVFVRYCVLL), and 170 to 190 (ITLAVIGLSWLVIGTTLVGFL). The HXXXXD motif motif lies at 238–243 (HTSPID). Residues 358–378 (MVSYILRMMTSWAIVCNVWYL) form a helical membrane-spanning segment.

This sequence belongs to the 1-acyl-sn-glycerol-3-phosphate acyltransferase family.

Its subcellular location is the endoplasmic reticulum membrane. It carries out the reaction sn-glycerol 3-phosphate + an acyl-CoA = a 1-acyl-sn-glycero-3-phosphate + CoA. The catalysed reaction is a 1-acyl-sn-glycero-3-phosphate + an acyl-CoA = a 1,2-diacyl-sn-glycero-3-phosphate + CoA. The enzyme catalyses dodecanoyl-CoA + sn-glycerol 3-phosphate = 1-dodecanoyl-sn-glycerol 3-phosphate + CoA. It catalyses the reaction sn-glycerol 3-phosphate + hexadecanoyl-CoA = 1-hexadecanoyl-sn-glycero-3-phosphate + CoA. It carries out the reaction sn-glycerol 3-phosphate + (9Z)-octadecenoyl-CoA = 1-(9Z-octadecenoyl)-sn-glycero-3-phosphate + CoA. The catalysed reaction is (9Z,12Z)-octadecadienoyl-CoA + sn-glycerol 3-phosphate = 1-(9Z,12Z)-octadecadienoyl-sn-glycero-3-phosphate + CoA. The enzyme catalyses 1-tetradecanoyl-sn-glycerol 3-phosphate + (9Z)-octadecenoyl-CoA = 1-tetradecanoyl-2-(9Z)-octadecenoyl-sn-glycero-3-phosphate + CoA. It catalyses the reaction 1-hexadecanoyl-sn-glycero-3-phosphate + (9Z)-octadecenoyl-CoA = 1-hexadecanoyl-2-(9Z-octadecenoyl)-sn-glycero-3-phosphate + CoA. It carries out the reaction 1-(9Z-octadecenoyl)-sn-glycero-3-phosphate + (9Z)-octadecenoyl-CoA = 1,2-di-(9Z-octadecenoyl)-sn-glycero-3-phosphate + CoA. The catalysed reaction is 1-(6Z,9Z,12Z-octadecatrienoyl)-sn-glycero-3-phosphate + (9Z)-octadecenoyl-CoA = (6Z,9Z,12Z)-octadecatrienoyl-2-(9Z)-octadecenoyl-sn-glycero-3-phosphate + CoA. The enzyme catalyses 1-(9Z,12Z,15Z)-octadecatrienoyl-sn-glycero-3-phosphate + (9Z)-octadecenoyl-CoA = 1-(9Z,12Z,15Z)-octadecatrienoyl-2-(9Z)-octadecenoyl-sn-glycero-3-phosphate + CoA. It catalyses the reaction 1-(9Z-octadecenoyl)-sn-glycero-3-phosphate + tetradecanoyl-CoA = 1-(9Z)-octadecenoyl-2-tetradecanoyl-sn-glycero-3-phosphate + CoA. It carries out the reaction 1-(9Z-octadecenoyl)-sn-glycero-3-phosphate + hexadecanoyl-CoA = 1-(9Z)-octadecenoyl-2-hexadecanoyl-sn-glycero-3-phosphate + CoA. The catalysed reaction is 1-(9Z-octadecenoyl)-sn-glycero-3-phosphate + octadecanoyl-CoA = 1-(9Z-octadecenoyl)-2-octadecanoyl-sn-glycero-3-phosphate + CoA. The enzyme catalyses 1-(9Z-octadecenoyl)-sn-glycero-3-phosphate + (9Z,12Z)-octadecadienoyl-CoA = 1-(9Z)-octadecenoyl-2-(9Z,12Z)-octadecadienoyl-sn-glycero-3-phosphate + CoA. It catalyses the reaction 1-(5Z,8Z,11Z,14Z-eicosatetraenoyl)-sn-glycero-3-phosphate + (9Z)-octadecenoyl-CoA = 1-(5Z,8Z,11Z,14Z)-eicosatetraenoyl-2-(9Z)-octadecenoyl-sn-glycero-3-phosphate + CoA. The protein operates within glycerolipid metabolism; triacylglycerol biosynthesis. Its pathway is phospholipid metabolism; CDP-diacylglycerol biosynthesis; CDP-diacylglycerol from sn-glycerol 3-phosphate: step 1/3. Converts glycerol-3-phosphate to 1-acyl-sn-glycerol-3-phosphate (lysophosphatidic acid or LPA) by incorporating an acyl moiety at the sn-1 position of the glycerol backbone. Also converts LPA into 1,2-diacyl-sn-glycerol-3-phosphate (phosphatidic acid or PA) by incorporating an acyl moiety at the sn-2 position of the glycerol backbone. Protects cells against lipotoxicity. This Danio rerio (Zebrafish) protein is Glycerol-3-phosphate acyltransferase 3.